Consider the following 706-residue polypeptide: Termination factor NPH-I homolog (706 aa).

The region spanning 62 to 227 is the Helicase ATP-binding domain; that stretch reads IGQGENTRGL…VPCFNMLSGR (166 aa). Position 75 to 82 (75 to 82) interacts with ATP; sequence HQMGMGKT. The DEAH box motif lies at 168–171; that stretch reads DEAH. The region spanning 417 to 599 is the Helicase C-terminal domain; sequence QCLQPLKVLE…HLNSAFRDLL (183 aa).

Belongs to the DEAD box helicase family. DEAH subfamily. As to quaternary structure, part of the viral DNA-directed RNA polymerase that consists of 8 polII-like subunits (RPB1, RPB2, RPB3, RPB5, RPB6, RPB7, RPB9, RPB10), a capping enzyme and a termination factor.

Its subcellular location is the virion. Functionally, putative DNA-dependent ATPase required for providing the needed energy to achieve the termination of early transcripts. This Ornithodoros (relapsing fever ticks) protein is Termination factor NPH-I homolog.